A 67-amino-acid polypeptide reads, in one-letter code: Andropin (67 aa).

The N-terminal stretch at 1 to 19 (MKYFLVLVVLTLILAISVG) is a signal peptide.

Belongs to the andropin family. Ejaculatory duct of adult males.

The protein localises to the secreted. Its function is as follows. Male-specific peptide with moderate activity against Gram-positive bacteria. The chain is Andropin (Anp) from Drosophila orena (Fruit fly).